Consider the following 118-residue polypeptide: Putative pterin-4-alpha-carbinolamine dehydratase (118 aa).

It belongs to the pterin-4-alpha-carbinolamine dehydratase family.

It carries out the reaction (4aS,6R)-4a-hydroxy-L-erythro-5,6,7,8-tetrahydrobiopterin = (6R)-L-erythro-6,7-dihydrobiopterin + H2O. This chain is Putative pterin-4-alpha-carbinolamine dehydratase, found in Xanthomonas oryzae pv. oryzae (strain PXO99A).